The following is a 138-amino-acid chain: Small ribosomal subunit protein bS6 (138 aa).

A compositionally biased stretch (basic and acidic residues) spans 97-121 (TEQSEMLKAEENRSERRERRDRPDN). Positions 97 to 138 (TEQSEMLKAEENRSERRERRDRPDNTDGSNENDSDSDNNADE) are disordered. The segment covering 126-138 (NENDSDSDNNADE) has biased composition (acidic residues).

This sequence belongs to the bacterial ribosomal protein bS6 family.

Its function is as follows. Binds together with bS18 to 16S ribosomal RNA. This Stutzerimonas stutzeri (strain A1501) (Pseudomonas stutzeri) protein is Small ribosomal subunit protein bS6.